Here is a 638-residue protein sequence, read N- to C-terminus: MILFKQVGYFVSLFATVSCGCLSQLYANTFFRGGDLAAIYTPDAQHCQKMCTFHPRCLLFSFLAVSPTKETDKRFGCFMKESITGTLPRIHRTGAISGHSLKQCGHQLSACHQDIYEGLDMRGSNFNISKTDSIEECQKLCTNNIHCQFFTYATKAFHRPEYRKSCLLKRSSSGTPTSIKPVDNLVSGFSLKSCALSEIGCPMDIFQHFAFADLNVSQVVTPDAFVCRTVCTFHPNCLFFTFYTNEWETESQRNVCFLKTSKSGRPSPPIIQENAVSGYSLFTCRKARPEPCHFKIYSGVAFEGEELNATFVQGADACQETCTKTIRCQFFTYSLLPQDCKAEGCKCSLRLSTDGSPTRITYEAQGSSGYSLRLCKVVESSDCTTKINARIVGGTNSSLGEWPWQVSLQVKLVSQNHMCGGSIIGRQWILTAAHCFDGIPYPDVWRIYGGILNLSEITNKTPFSSIKELIIHQKYKMSEGSYDIALIKLQTPLNYTEFQKPICLPSKADTNTIYTNCWVTGWGYTKERGETQNILQKATIPLVPNEECQKKYRDYVITKQMICAGYKEGGIDACKGDSGGPLVCKHSGRWQLVGITSWGEGCARKEQPGVYTKVAEYIDWILEKIQSSKERALETSPA.

Positions 1-19 (MILFKQVGYFVSLFATVSC) are cleaved as a signal peptide. Apple domains lie at 21 to 104 (CLSQ…LKQC), 111 to 194 (CHQD…LKSC), 201 to 284 (CPMD…LFTC), and 292 to 375 (CHFK…LRLC). Intrachain disulfides connect Cys-21-Cys-104, Cys-47-Cys-77, Cys-51-Cys-57, Cys-111-Cys-194, Cys-137-Cys-166, Cys-141-Cys-147, Cys-201-Cys-284, Cys-227-Cys-256, Cys-231-Cys-237, Cys-292-Cys-375, Cys-318-Cys-347, Cys-322-Cys-328, Cys-340-Cys-345, Cys-383-Cys-503, Cys-419-Cys-435, Cys-517-Cys-584, Cys-548-Cys-563, and Cys-574-Cys-602. Asn-127 is a glycosylation site (N-linked (GlcNAc...) asparagine). Asn-215 is a glycosylation site (N-linked (GlcNAc...) asparagine). Asn-308 is a glycosylation site (N-linked (GlcNAc...) asparagine). Residues 391 to 626 (IVGGTNSSLG…YIDWILEKIQ (236 aa)) enclose the Peptidase S1 domain. N-linked (GlcNAc...) asparagine glycosylation is present at Asn-396. His-434 (charge relay system) is an active-site residue. A glycan (N-linked (GlcNAc...) asparagine) is linked at Asn-453. Asp-483 acts as the Charge relay system in catalysis. Asn-494 carries N-linked (GlcNAc...) asparagine glycosylation. Ser-578 acts as the Charge relay system in catalysis.

This sequence belongs to the peptidase S1 family. Plasma kallikrein subfamily. As to quaternary structure, forms a heterodimer with SERPINA5. The zymogen is activated by factor XIIa, which cleaves the molecule into a light chain, which contains the active site, and a heavy chain, which associates with HMW kininogen. These chains are linked by one or more disulfide bonds.

The protein localises to the secreted. The catalysed reaction is Cleaves selectively Arg-|-Xaa and Lys-|-Xaa bonds, including Lys-|-Arg and Arg-|-Ser bonds in (human) kininogen to release bradykinin.. Inhibited by SERPINA5. Its function is as follows. The enzyme cleaves Lys-Arg and Arg-Ser bonds. It activates, in a reciprocal reaction, factor XII after its binding to a negatively charged surface. It also releases bradykinin from HMW kininogen and may also play a role in the renin-angiotensin system by converting prorenin into renin. The polypeptide is Plasma kallikrein (Klkb1) (Rattus norvegicus (Rat)).